Reading from the N-terminus, the 384-residue chain is S-adenosylmethionine synthase (384 aa).

H15 lines the ATP pocket. D17 is a binding site for Mg(2+). Position 43 (E43) interacts with K(+). L-methionine-binding residues include E56 and Q99. The interval 99–109 (QSPDINQGVDK) is flexible loop. ATP contacts are provided by residues 164 to 166 (DAK), 230 to 231 (RF), D239, 245 to 246 (RK), A262, and K266. D239 contacts L-methionine. L-methionine is bound at residue K270.

Belongs to the AdoMet synthase family. As to quaternary structure, homotetramer; dimer of dimers. Mg(2+) is required as a cofactor. The cofactor is K(+).

Its subcellular location is the cytoplasm. It carries out the reaction L-methionine + ATP + H2O = S-adenosyl-L-methionine + phosphate + diphosphate. Its pathway is amino-acid biosynthesis; S-adenosyl-L-methionine biosynthesis; S-adenosyl-L-methionine from L-methionine: step 1/1. Its function is as follows. Catalyzes the formation of S-adenosylmethionine (AdoMet) from methionine and ATP. The overall synthetic reaction is composed of two sequential steps, AdoMet formation and the subsequent tripolyphosphate hydrolysis which occurs prior to release of AdoMet from the enzyme. The sequence is that of S-adenosylmethionine synthase from Vibrio parahaemolyticus serotype O3:K6 (strain RIMD 2210633).